We begin with the raw amino-acid sequence, 294 residues long: N-acetylmuramic acid 6-phosphate etherase (294 aa).

Residues 54-217 (VIKSFEEEGR…STASMIGVGK (164 aa)) enclose the SIS domain. Glutamate 82 functions as the Proton donor in the catalytic mechanism. The active site involves glutamate 113.

The protein belongs to the GCKR-like family. MurNAc-6-P etherase subfamily. Homodimer.

It catalyses the reaction N-acetyl-D-muramate 6-phosphate + H2O = N-acetyl-D-glucosamine 6-phosphate + (R)-lactate. The protein operates within amino-sugar metabolism; N-acetylmuramate degradation. Functionally, specifically catalyzes the cleavage of the D-lactyl ether substituent of MurNAc 6-phosphate, producing GlcNAc 6-phosphate and D-lactate. This chain is N-acetylmuramic acid 6-phosphate etherase, found in Bacillus cereus (strain ATCC 14579 / DSM 31 / CCUG 7414 / JCM 2152 / NBRC 15305 / NCIMB 9373 / NCTC 2599 / NRRL B-3711).